Consider the following 285-residue polypeptide: tRNA U34 carboxymethyltransferase (285 aa).

Residues lysine 56, tryptophan 70, lysine 75, glycine 94, 143 to 144, tyrosine 163, and arginine 278 contribute to the carboxy-S-adenosyl-L-methionine site; that span reads VE.

The protein belongs to the class I-like SAM-binding methyltransferase superfamily. CmoB family. Homotetramer.

It catalyses the reaction carboxy-S-adenosyl-L-methionine + 5-hydroxyuridine(34) in tRNA = 5-carboxymethoxyuridine(34) in tRNA + S-adenosyl-L-homocysteine + H(+). In terms of biological role, catalyzes carboxymethyl transfer from carboxy-S-adenosyl-L-methionine (Cx-SAM) to 5-hydroxyuridine (ho5U) to form 5-carboxymethoxyuridine (cmo5U) at position 34 in tRNAs. The chain is tRNA U34 carboxymethyltransferase from Campylobacter hominis (strain ATCC BAA-381 / DSM 21671 / CCUG 45161 / LMG 19568 / NCTC 13146 / CH001A).